The following is a 207-amino-acid chain: Guanylate kinase (207 aa).

The region spanning 4-184 (GTLYIVSAPS…ALTDLKTIIR (181 aa)) is the Guanylate kinase-like domain. 11 to 18 (APSGAGKS) is a binding site for ATP.

It belongs to the guanylate kinase family.

The protein resides in the cytoplasm. The enzyme catalyses GMP + ATP = GDP + ADP. In terms of biological role, essential for recycling GMP and indirectly, cGMP. The polypeptide is Guanylate kinase (Escherichia coli O157:H7).